The sequence spans 45 residues: Large ribosomal subunit protein bL34 (45 aa).

Residues 26–45 are disordered; sequence RAGRSILSARRSKGRSQLSA.

It belongs to the bacterial ribosomal protein bL34 family.

The sequence is that of Large ribosomal subunit protein bL34 from Parafrankia sp. (strain EAN1pec).